The following is a 195-amino-acid chain: Dephospho-CoA kinase (195 aa).

One can recognise a DPCK domain in the interval 2-195 (IIGLTGGIGV…DIVDSLSLSS (194 aa)). Position 10–15 (10–15 (GVGKSF)) interacts with ATP.

Belongs to the CoaE family.

The protein localises to the cytoplasm. It catalyses the reaction 3'-dephospho-CoA + ATP = ADP + CoA + H(+). It functions in the pathway cofactor biosynthesis; coenzyme A biosynthesis; CoA from (R)-pantothenate: step 5/5. Functionally, catalyzes the phosphorylation of the 3'-hydroxyl group of dephosphocoenzyme A to form coenzyme A. The chain is Dephospho-CoA kinase from Wolbachia sp. subsp. Brugia malayi (strain TRS).